Here is a 55-residue protein sequence, read N- to C-terminus: Glycine-rich antimicrobial peptide Pg-AMP (55 aa).

Gly residues predominate over residues 18 to 39; sequence GYGGYGGGRYGGGYGSGRGQPV. The interval 18–55 is disordered; it reads GYGGYGGGRYGGGYGSGRGQPVGQGVERSHDDNRNQPR. The segment covering 44–55 has biased composition (basic and acidic residues); sequence ERSHDDNRNQPR.

In terms of assembly, monomer and homodimer. Might act by homodimer formation.

In terms of biological role, has antibacterial activity against the Gram-negative bacteria Klebsiella sp., Proteus sp., E.coli ATCC 8739 (MIC=72 ug/ml) and K.pneumoniae (MIC=32 ug/ml). Has no activity against the Gram-negative bacterium S.typhimurium or the Gram-positive bacterium S.aureus. Does not have antifungal activity against the human and plant pathogenic fungi F.oxysporum, A.fumigatus and R.solani. The chain is Glycine-rich antimicrobial peptide Pg-AMP from Psidium guajava (Guava).